We begin with the raw amino-acid sequence, 295 residues long: Acetylglutamate kinase (295 aa).

Substrate contacts are provided by residues 66-67, Arg-88, and Asn-193; that span reads GG.

Belongs to the acetylglutamate kinase family. ArgB subfamily.

The protein localises to the cytoplasm. The enzyme catalyses N-acetyl-L-glutamate + ATP = N-acetyl-L-glutamyl 5-phosphate + ADP. Its pathway is amino-acid biosynthesis; L-arginine biosynthesis; N(2)-acetyl-L-ornithine from L-glutamate: step 2/4. Its function is as follows. Catalyzes the ATP-dependent phosphorylation of N-acetyl-L-glutamate. The polypeptide is Acetylglutamate kinase (Bradyrhizobium diazoefficiens (strain JCM 10833 / BCRC 13528 / IAM 13628 / NBRC 14792 / USDA 110)).